Consider the following 164-residue polypeptide: Small ribosomal subunit protein uS5 (164 aa).

Positions 10–73 (LEERVVAINR…EAAKKNMIEV (64 aa)) constitute an S5 DRBM domain.

The protein belongs to the universal ribosomal protein uS5 family. Part of the 30S ribosomal subunit. Contacts proteins S4 and S8.

Its function is as follows. With S4 and S12 plays an important role in translational accuracy. Functionally, located at the back of the 30S subunit body where it stabilizes the conformation of the head with respect to the body. This is Small ribosomal subunit protein uS5 from Streptococcus pyogenes serotype M1.